The primary structure comprises 738 residues: Polyphosphate kinase (738 aa).

Residues 1-48 are disordered; that stretch reads MIGNDRWVTEIETGPVTEARPDTNAREPGDRTPAAPPAATPAATTDQL. Over residues 19-30 the composition is skewed to basic and acidic residues; the sequence is ARPDTNAREPGD. Asn91 contributes to the ATP binding site. Arg427 and Arg457 together coordinate Mg(2+). Residue His487 is the Phosphohistidine intermediate of the active site. ATP contacts are provided by Tyr520, Arg620, and His648.

Belongs to the polyphosphate kinase 1 (PPK1) family. It depends on Mg(2+) as a cofactor. In terms of processing, an intermediate of this reaction is the autophosphorylated ppk in which a phosphate is covalently linked to a histidine residue through a N-P bond.

It carries out the reaction [phosphate](n) + ATP = [phosphate](n+1) + ADP. Functionally, catalyzes the reversible transfer of the terminal phosphate of ATP to form a long-chain polyphosphate (polyP). The chain is Polyphosphate kinase from Mycobacterium marinum (strain ATCC BAA-535 / M).